Reading from the N-terminus, the 501-residue chain is ATP synthase subunit alpha (501 aa).

169-176 (GDRQTGKT) contacts ATP.

The protein belongs to the ATPase alpha/beta chains family. F-type ATPases have 2 components, CF(1) - the catalytic core - and CF(0) - the membrane proton channel. CF(1) has five subunits: alpha(3), beta(3), gamma(1), delta(1), epsilon(1). CF(0) has three main subunits: a(1), b(2) and c(9-12). The alpha and beta chains form an alternating ring which encloses part of the gamma chain. CF(1) is attached to CF(0) by a central stalk formed by the gamma and epsilon chains, while a peripheral stalk is formed by the delta and b chains.

Its subcellular location is the cell inner membrane. It catalyses the reaction ATP + H2O + 4 H(+)(in) = ADP + phosphate + 5 H(+)(out). Its function is as follows. Produces ATP from ADP in the presence of a proton gradient across the membrane. The alpha chain is a regulatory subunit. The chain is ATP synthase subunit alpha from Campylobacter jejuni subsp. doylei (strain ATCC BAA-1458 / RM4099 / 269.97).